We begin with the raw amino-acid sequence, 957 residues long: Isoleucine--tRNA ligase (957 aa).

The 'HIGH' region signature appears at 57-67; sequence PYANGDIHIGH. Position 594 (glutamate 594) interacts with L-isoleucyl-5'-AMP. A 'KMSKS' region motif is present at residues 635–639; that stretch reads KMSKS. Lysine 638 is an ATP binding site. Zn(2+) contacts are provided by cysteine 920, cysteine 923, cysteine 940, and cysteine 943.

This sequence belongs to the class-I aminoacyl-tRNA synthetase family. IleS type 1 subfamily. In terms of assembly, monomer. Requires Zn(2+) as cofactor.

It is found in the cytoplasm. It catalyses the reaction tRNA(Ile) + L-isoleucine + ATP = L-isoleucyl-tRNA(Ile) + AMP + diphosphate. Catalyzes the attachment of isoleucine to tRNA(Ile). As IleRS can inadvertently accommodate and process structurally similar amino acids such as valine, to avoid such errors it has two additional distinct tRNA(Ile)-dependent editing activities. One activity is designated as 'pretransfer' editing and involves the hydrolysis of activated Val-AMP. The other activity is designated 'posttransfer' editing and involves deacylation of mischarged Val-tRNA(Ile). The sequence is that of Isoleucine--tRNA ligase from Laribacter hongkongensis (strain HLHK9).